Here is a 914-residue protein sequence, read N- to C-terminus: MSDNEYDITNALALDAGSDSDSDVSSGREDVEDDIQDEIISDDEEKSSSSQNKKPKISTKPESFPSLELSDDEDDESRPSEVAEYFSNNKLQATKAKAGSFASFGLSKFLLKNIAKKGFKQPTPIQRKTIPLVMESRDVVGMARTGSGKTAAFVLPVVEKLKSHSPKVGVRAVILSPSRELALQTFKQVKEFTKGTDLRSIVLIGGDSLEDQFSSMMTNPDILVATPGRFLHLKVEMNLDLKTVEYIVFDEADRLFEMGFAEQLNELLVALPPSRQSLLFSATLPRSLVDFAKAGLSNPVLVRLDAETKISDQLQMAFFTTKRTERDANLLYILSEVIKMPLATQDQIKKLKELEEGADDDDSDEEKKPKKKKRKLEKPAPANRLPSEHSTIVFVPTKHHVEYVTTLLRDAGHLVSYIYGTLDQHARKQQLYQFRAAYTNILVVTDVAARGIDIPVLANVVNYTLPGSSKIFIHRVGRTARAGNKGWAYSIVNEKELPYLLDLELFLGKKVLLTQMHEKKVQICHEKGLSAPEVSYKDRLVLGSAPRVDIESSQELCDNLLRNHYELRTIRDVANKGEILYYRTRQPASQESVKRAKEIMDTGAWDDQHLLFGANLEKEKEKFLAKLADRKVKETVFEFRNKGQRDEDSLVEFMHKRRRQIAPIQRRAKERKQLLEKERMAGLTHGIENEILKGDGEVGYDNYNGADLDEVFEDGDEALSKKKRKTYRDPQFFLSHYAPASVIQDKQLELSSFSNEAAAATYDLDNDDKTQTNKQIMRWDKKKGKYINSQSTDKKYIIGESGQKIPATYRSGRYEDWRKSRNAQPLRTGAEEVKSNGRFKHKKVAAPKMPDKFRDDYHKQKKKVEKALDAGVSVKGYNRPGQQQELRSTEQIRKARELKEKRKAKNARPSKRRK.

A disordered region spans residues 1 to 81 (MSDNEYDITN…DEDDESRPSE (81 aa)). Residues 12-25 (LALDAGSDSDSDVS) show a composition bias toward low complexity. The segment covering 30-45 (DVEDDIQDEIISDDEE) has biased composition (acidic residues). The Q motif signature appears at 99-127 (GSFASFGLSKFLLKNIAKKGFKQPTPIQR). One can recognise a Helicase ATP-binding domain in the interval 130 to 302 (IPLVMESRDV…KAGLSNPVLV (173 aa)). 143–150 (ARTGSGKT) serves as a coordination point for ATP. The short motif at 250 to 253 (DEAD) is the DEAD box element. Disordered stretches follow at residues 353–389 (ELEEGADDDDSDEEKKPKKKKRKLEKPAPANRLPSEH) and 840–914 (KHKK…KRRK). Positions 368–522 (KPKKKKRKLE…LTQMHEKKVQ (155 aa)) constitute a Helicase C-terminal domain. Basic and acidic residues-rich tracts occupy residues 849-858 (MPDKFRDDYH) and 887-900 (RSTEQIRKARELKE). Over residues 901–914 (KRKAKNARPSKRRK) the composition is skewed to basic residues.

The protein belongs to the DEAD box helicase family. DDX54/DBP10 subfamily.

It localises to the nucleus. It is found in the nucleolus. The enzyme catalyses ATP + H2O = ADP + phosphate + H(+). ATP-binding RNA helicase involved in the biogenesis of 60S ribosomal subunits and is required for the normal formation of 25S and 5.8S rRNAs. This chain is ATP-dependent RNA helicase DBP10 (DBP10), found in Meyerozyma guilliermondii (strain ATCC 6260 / CBS 566 / DSM 6381 / JCM 1539 / NBRC 10279 / NRRL Y-324) (Yeast).